A 367-amino-acid polypeptide reads, in one-letter code: Developmentally-regulated GTP-binding protein 1 (367 aa).

An N-acetylserine modification is found at Ser2. Residues 2–16 (SSTLAKIAEIEAEMA) are required for interaction with STK16. The residue at position 22 (Lys22) is a (3S)-3-hydroxylysine. The region spanning 65 to 290 (ARIGFVGFPS…LLEKIWDYLK (226 aa)) is the OBG-type G domain. GTP contacts are provided by residues 71–78 (GFPSVGKS), 96–100 (FTTLT), 117–120 (DLPG), 248–251 (NKID), and 271–273 (SAH). 2 residues coordinate Mg(2+): Ser78 and Thr98. A Phosphothreonine; by STK16 modification is found at Thr100. One can recognise a TGS domain in the interval 290-366 (KLVRIYTKPK…EDEDVIQIVK (77 aa)).

The protein belongs to the TRAFAC class OBG-HflX-like GTPase superfamily. OBG GTPase family. In terms of assembly, interacts (via its C-terminal) with TAL1. Interacts with DFRP1/ZC3H15; this interaction prevents DRG1 poly-ubiquitination and degradation by proteasome. DRG1-ZC3H15/DFRP1 complex co-sediments with polysomes. Interacts with STK16. Interacts with JMJD7. In terms of processing, sumoylated by UBE2I in response to MEKK1-mediated stimuli. Post-translationally, hydroxylated (with S stereochemistry) at C-3 of Lys-22 by JMJD7. Phosphorylated at Thr-100 by STK16. In terms of processing, polyubiquitinated; this modification induces proteolytic degradation and is impaired by interaction with ZC3H15.

Its subcellular location is the nucleus. It is found in the cytoplasm. It catalyses the reaction GTP + H2O = GDP + phosphate + H(+). With respect to regulation, the GTPase activity is enhanced by potassium ions as well as by DFRP1 binding. In terms of biological role, catalyzes the conversion of GTP to GDP through hydrolysis of the gamma-phosphate bond in GTP. Appears to have an intrinsic GTPase activity that is stimulated by ZC3H15/DFRP1 binding likely by increasing the affinity for the potassium ions. When hydroxylated at C-3 of 'Lys-22' by JMJD7, may bind to RNA and play a role in translation. Binds to microtubules and promotes microtubule polymerization and bundling that are required for mitotic spindle assembly during prophase to anaphase transition. GTPase activity is not necessary for these microtubule-related functions. This is Developmentally-regulated GTP-binding protein 1 (DRG1) from Bos taurus (Bovine).